A 773-amino-acid polypeptide reads, in one-letter code: MVGPTRSKLREGSSDRPQSSCTGQARRRWSAATMEPQQERSAPQERTKWSLLQHFLLGGRKLPSGARNYAARRIQSLNAQNYFQLEEVAKLLLLNRFQFLFTLLDHFREKVQALQMHRFSHRTLFGLAIFVGILHWLHLITLFENDHHFSHLSSLEREMTFRTEMGLYYSYFKTIIEAPSFLEGLWMIMNDRLTEYPLVINTVKRFHLYPEVVIAYWYRTIIGIMNLFGIETKTCWNVTRMEPLNEVQSCEGLGDPACFYIGVIFILNGLMMGLFFIYSTYLSGSQLGGLITVACYFFNHGEATRVMWTPPLRESFSYPFLVLQMYILTIILRTSTVHKKHYMALCFSNVAFMLPWQFAQFILFTQIASLFPMYVVGYIEPSKFQKIIYVNMSSVALCFILMFGNSMYLSSYYSSCLLVTWAIMQKKSKIQKLGGTELQFWLIQGCFWWCGTIILKFLTSKICGVSDHIRLSDLIAARILRYTDFDTLIYTCAPEFDFMEQATPLRYIKTLLLPLILVITYLIFKKIVRDIMCVLYTNTYVRKQLLDNAELIFHTLQLLAFTGLAILIMRLKLFLTPHMCIMASLICSQRLFGWLFCRIHFENVVFGILTMMSIQGCANLHNQWSIMGEFTNLPQEELIHWIKHSTRPDAVFAGAMPTMASIKLSTLRPIVNHPHYEDADLRARTKIVYSVYSRKSAVEVRNNLLKLHVNYYVLEEAWCVVRTKPGCSMLEIWDVEDPSNAANPPLCSILLKDSRPYFTTVFQNSMYRVLKIN.

A disordered region spans residues 1 to 45; the sequence is MVGPTRSKLREGSSDRPQSSCTGQARRRWSAATMEPQQERSAPQE. The Nuclear portion of the chain corresponds to 1 to 122; that stretch reads MVGPTRSKLR…ALQMHRFSHR (122 aa). A helical membrane pass occupies residues 123-143; sequence TLFGLAIFVGILHWLHLITLF. Over 144–209 the chain is Perinuclear space; the sequence is ENDHHFSHLS…INTVKRFHLY (66 aa). A helical membrane pass occupies residues 210 to 230; the sequence is PEVVIAYWYRTIIGIMNLFGI. At 231 to 256 the chain is on the nuclear side; that stretch reads ETKTCWNVTRMEPLNEVQSCEGLGDP. Residues 257 to 277 traverse the membrane as a helical segment; sequence ACFYIGVIFILNGLMMGLFFI. Residues 278–311 lie on the Perinuclear space side of the membrane; it reads YSTYLSGSQLGGLITVACYFFNHGEATRVMWTPP. Residues 312–332 form a helical membrane-spanning segment; sequence LRESFSYPFLVLQMYILTIIL. The Nuclear portion of the chain corresponds to 333–358; sequence RTSTVHKKHYMALCFSNVAFMLPWQF. Residues 359–379 traverse the membrane as a helical segment; the sequence is AQFILFTQIASLFPMYVVGYI. Residues 380 to 386 are Perinuclear space-facing; the sequence is EPSKFQK. Residues 387–407 form a helical membrane-spanning segment; that stretch reads IIYVNMSSVALCFILMFGNSM. Topologically, residues 408 to 437 are nuclear; it reads YLSSYYSSCLLVTWAIMQKKSKIQKLGGTE. A helical transmembrane segment spans residues 438 to 458; the sequence is LQFWLIQGCFWWCGTIILKFL. The Perinuclear space portion of the chain corresponds to 459–507; the sequence is TSKICGVSDHIRLSDLIAARILRYTDFDTLIYTCAPEFDFMEQATPLRY. The chain crosses the membrane as a helical span at residues 508–528; the sequence is IKTLLLPLILVITYLIFKKIV. The Nuclear portion of the chain corresponds to 529–548; that stretch reads RDIMCVLYTNTYVRKQLLDN. The helical transmembrane segment at 549–569 threads the bilayer; it reads AELIFHTLQLLAFTGLAILIM. Residues 570-590 lie on the Perinuclear space side of the membrane; that stretch reads RLKLFLTPHMCIMASLICSQR. The helical transmembrane segment at 591–611 threads the bilayer; sequence LFGWLFCRIHFENVVFGILTM. Residues 612–773 are Nuclear-facing; the sequence is MSIQGCANLH…NSMYRVLKIN (162 aa).

Belongs to the dpy-19 family. In terms of assembly, interacts with FAM209. Predominantly expressed in testis. Present in testis but absent from epididymal sperm (at protein level).

It localises to the nucleus inner membrane. Probable C-mannosyltransferase that mediates C-mannosylation of tryptophan residues on target proteins. In terms of biological role, required during spermatogenesis for sperm head elongation and acrosome formation. Also plays a role in acrosome attachment to the nuclear envelope. The sequence is that of Probable C-mannosyltransferase DPY19L2 (Dpy19l2) from Mus musculus (Mouse).